The primary structure comprises 994 residues: ASI1-immunoprecipitated protein 2 (994 aa).

Disordered stretches follow at residues 39–182 (AEFS…SGEN) and 187–206 (KADESNTSAMSDSESENDPE). Basic and acidic residues predominate over residues 45–54 (KSDESSDENS). Polar residues predominate over residues 60 to 102 (SQCSFNGDNLLRSSGVNAPGSSHNTSSEASHLVNSNHDTSSEN). Basic and acidic residues-rich tracts occupy residues 119–140 (LLDRPHKDQDSMKVDSCNDHQA) and 148–163 (KVKEKSGAKNNEEKKN). A PHD-type zinc finger spans residues 212–263 (VKVCDTCGDAGREDLLAICSRCSDGAEHTYCMRVMLKKVPKGYWLCEECKFA). Residues cysteine 215, cysteine 218, cysteine 230, cysteine 233, histidine 239, cysteine 242, cysteine 257, and cysteine 260 each coordinate Zn(2+). Disordered stretches follow at residues 342–567 (AHYS…NNKG) and 839–875 (CSNPPKNTPLPASCVSPNRDTFRHENPSNKKSLTDRT). A compositionally biased stretch (low complexity) spans 371–384 (SFLKSNSFNSLSSR). 2 stretches are compositionally biased toward polar residues: residues 417–435 (VGKSMSSRCIDVGSSNCND) and 449–464 (TEANPSASISRGNSSI). Basic and acidic residues-rich tracts occupy residues 469 to 478 (SPRDLKDLQS), 536 to 552 (PRSREFREAGEKTKDAV), and 858 to 875 (DTFRHENPSNKKSLTDRT).

Component of the ASI1-AIPP1-EDM2 (AAE) RNA regulatory complex composed of at least AIPP1/EDM3, ASI1 and EDM2 and may contain CPL2, AIPP2 and AIPP3/BDT1. Part of the BAH-PHD bivalent histone reader complex that contains AIPP2, PAIPP2 and AIPP3/BDT1; the BAH-PHD module associates with CPL2 to form the BAH-PHD-CPL2 complex (BPC) for transcriptional repression. Binds directly to ASI1, AIPP3/BDT1 and CPL2 but not to PAIPP2. As to expression, expressed ubiquitously.

In terms of biological role, together with AIPP3/BDT1 and PAIPP2, cooperates to form a BAH-PHD bivalent histone reader complex able to read histone H3 lysine 27 trimethylation (H3K27me3) and low-methylated H3K4 histone marks in order to regulate transcription, especially to prevent early flowering; promotes AIPP3/BDT1 binding to H3K27me3. CPL2 is subsequently recruited to form a BAH-PHD-CPL2 complex (BPC) in order to silence several H3K27me3 and low-methylated H3K4 enriched loci, including AGO5, via the phosphorylation state-dependent inhibition of Pol II release from the transcriptional start site (e.g. Ser5P-Pol II dephosphorylation). The BPC complex represses flowering by inhibiting the expression of several genes, including AGL6, FT, FUL and SOC1. Prevents the accumulation of intronic heterochromatin-containing genes (e.g. IBM1, At3g05410 and RPP7). This is ASI1-immunoprecipitated protein 2 from Arabidopsis thaliana (Mouse-ear cress).